The chain runs to 796 residues: DnaJ homolog subfamily C member 10 (796 aa).

The N-terminal stretch at 1–33 is a signal peptide; that stretch reads MKHSLNTATSSSSVLKRTILYLVLISLAALVYC. Positions 36 to 100 constitute a J domain; that stretch reads DYYDLLGVSK…DLRKKYDKYG (65 aa). In terms of domain architecture, Thioredoxin 1 spans 131 to 233; sequence EIITLDRGEF…ERLVNFAMPY (103 aa). The cysteines at positions 159 and 162 are disulfide-linked. Trxb stretches follow at residues 236 to 351 and 349 to 464; these read STVT…LPDL and PDLE…PTNF. Thioredoxin domains are found at residues 455–554, 558–668, and 672–780; these read HVIT…IEDL, SVVT…ALMY, and ASFD…ITKR. Cys481 and Cys484 are oxidised to a cystine. N-linked (GlcNAc...) asparagine glycosylation is present at Asn531. 2 disulfides stabilise this stretch: Cys589–Cys592 and Cys701–Cys704. A glycan (N-linked (GlcNAc...) asparagine) is linked at Asn753. Positions 793–796 match the Prevents secretion from ER motif; sequence KDEL.

Its subcellular location is the endoplasmic reticulum lumen. Endoplasmic reticulum disulfide reductase involved both in the correct folding of proteins and degradation of misfolded proteins. Required for efficient folding of proteins in the endoplasmic reticulum by catalyzing the removal of non-native disulfide bonds formed during the folding of proteins. Also involved in endoplasmic reticulum-associated degradation (ERAD) by reducing incorrect disulfide bonds in misfolded glycoproteins. This Xenopus laevis (African clawed frog) protein is DnaJ homolog subfamily C member 10 (dnajc10).